A 261-amino-acid polypeptide reads, in one-letter code: MTGMESPRDIRARIARSQWTKPTTGLAPAYAQANVVILDRRYAFDFLLFCVRNSKPCPILEVLEPGVTEPHATAPGADIRTDVPLYRVWRKGRLEQEATDITGCFDAGMVSFLLGCSFTFEASLTGAGVPVRNIEEGKNVSMYVTNRKCASAGPFSAPLVVTMRPIPNDLVMRAVRITSRYSLAHGAPIQVGDPGALGIRDLDRPDFGDPVTVKDGETPVFWACGVTSSLAVLSAEPELCITHAPGHMFITDVLNETLAAL.

The protein belongs to the D-glutamate cyclase family.

This chain is Putative hydro-lyase Sfum_3393, found in Syntrophobacter fumaroxidans (strain DSM 10017 / MPOB).